The chain runs to 507 residues: Cytochrome P450 monooxygenase tpeC (507 aa).

A helical membrane pass occupies residues 24–44; sequence TLAIALIVGFVILKAIYNVFF. Residue Cys-449 coordinates heme.

It belongs to the cytochrome P450 family. Requires heme as cofactor.

The protein localises to the membrane. The protein operates within secondary metabolite biosynthesis. Its function is as follows. Cytochrome P450 monooxygenase; part of the gene cluster that mediates the biosynthesis of polyesters containing 2,4-dihydroxy-6-(2-hydroxypropyl)benzoate and 3-hydroxybutyrate moieties, such as talapolyester G, 15G256beta and 15G256beta-2; as well as to oxidized derivatives such as 15G256alpha. The biosynthesis of the polyesters probably starts with the formation of the diketide 3-hydroxybutyryl-S-ACP catalyzed by the partially reducing polyketide synthase tpeA. The acceptance of 3-hydroxybutyryl by the non-reducing polyketide synthase tpeB would initiate further elongation and cyclization, catalyzed by KS and PT, respectively, to form 2,4-dihydroxy-6-(2-hydroxyn-propyl)benzoyl-S-ACP intermediate. The TE domain could catalyze lactonization at this step to yield 6-hydroxymellein as a derailment product. The polyesterification process maybe occurs when additional molecules of 3-hydroxybutyryl are transferred to tpeB. Following the first esterification step, an intramolecular cyclization catalyzed by the TE domain of tpeB would give talarodioxadione 1, whereas the ethyl esterification of talapolyester G perhaps happens spontaneously. Further oxidation by the cytochrome P450 monooxygenase tpeC then leads to the formation of oxidized derivatives. The polypeptide is Cytochrome P450 monooxygenase tpeC (Talaromyces stipitatus (strain ATCC 10500 / CBS 375.48 / QM 6759 / NRRL 1006) (Penicillium stipitatum)).